Consider the following 181-residue polypeptide: Putative NAD(P)H-dependent FMN-containing oxidoreductase YwqN (181 aa).

It belongs to the SsuE family. FMN serves as cofactor.

Its function is as follows. Putative NADPH-dependent oxidoreductase. This Bacillus subtilis (strain 168) protein is Putative NAD(P)H-dependent FMN-containing oxidoreductase YwqN (ywqN).